Consider the following 149-residue polypeptide: UPF0179 protein TON_1048 (149 aa).

The protein belongs to the UPF0179 family.

This Thermococcus onnurineus (strain NA1) protein is UPF0179 protein TON_1048.